The following is a 316-amino-acid chain: L-lactate dehydrogenase 3 (316 aa).

Residues valine 16, aspartate 37, arginine 42, and tyrosine 68 each contribute to the NAD(+) site. Substrate is bound at residue arginine 91. NAD(+) is bound by residues serine 104, 121–123 (ASN), and threonine 146. 123–126 (NPVD) contacts substrate. Substrate is bound at residue 151–154 (DSSR). 2 residues coordinate beta-D-fructose 1,6-bisphosphate: arginine 156 and histidine 171. Histidine 178 (proton acceptor) is an active-site residue. Threonine 233 serves as a coordination point for substrate.

Belongs to the LDH/MDH superfamily. LDH family. As to quaternary structure, homotetramer.

The protein localises to the cytoplasm. It catalyses the reaction (S)-lactate + NAD(+) = pyruvate + NADH + H(+). It participates in fermentation; pyruvate fermentation to lactate; (S)-lactate from pyruvate: step 1/1. With respect to regulation, allosterically activated by fructose 1,6-bisphosphate (FBP). In terms of biological role, catalyzes the conversion of lactate to pyruvate. The sequence is that of L-lactate dehydrogenase 3 from Bacillus thuringiensis subsp. konkukian (strain 97-27).